Reading from the N-terminus, the 150-residue chain is Transcriptional repressor NrdR (150 aa).

The segment at 3 to 34 (CPFCGYEETKVLDSRPVSNGTSIRRRRECLQC) is a zinc-finger region. The ATP-cone domain occupies 49–139 (IRIIKKDGRR…VYKEFRDLDS (91 aa)).

Belongs to the NrdR family. Requires Zn(2+) as cofactor.

Functionally, negatively regulates transcription of bacterial ribonucleotide reductase nrd genes and operons by binding to NrdR-boxes. The protein is Transcriptional repressor NrdR of Petrotoga mobilis (strain DSM 10674 / SJ95).